The following is a 177-amino-acid chain: SPbeta prophage-derived uncharacterized N-acetyltransferase YokL (177 aa).

The N-acetyltransferase domain maps to 11 to 170 (LTLRAIQPED…DGICFGMTRE (160 aa)).

It belongs to the acetyltransferase family.

The sequence is that of SPbeta prophage-derived uncharacterized N-acetyltransferase YokL (yokL) from Bacillus subtilis (strain 168).